We begin with the raw amino-acid sequence, 382 residues long: Chorismate synthase (382 aa).

NADP(+) is bound by residues Arg-39 and Arg-45. FMN is bound by residues 127–129, 245–246, Gly-290, 305–309, and Arg-331; these read RAS, QA, and KPIPT.

Belongs to the chorismate synthase family. Homotetramer. FMNH2 serves as cofactor.

It catalyses the reaction 5-O-(1-carboxyvinyl)-3-phosphoshikimate = chorismate + phosphate. The protein operates within metabolic intermediate biosynthesis; chorismate biosynthesis; chorismate from D-erythrose 4-phosphate and phosphoenolpyruvate: step 7/7. Catalyzes the anti-1,4-elimination of the C-3 phosphate and the C-6 proR hydrogen from 5-enolpyruvylshikimate-3-phosphate (EPSP) to yield chorismate, which is the branch point compound that serves as the starting substrate for the three terminal pathways of aromatic amino acid biosynthesis. This reaction introduces a second double bond into the aromatic ring system. This chain is Chorismate synthase, found in Desulfitobacterium hafniense (strain Y51).